The sequence spans 74 residues: Small ribosomal subunit protein eS28 (74 aa).

Belongs to the eukaryotic ribosomal protein eS28 family.

This Halorubrum lacusprofundi (strain ATCC 49239 / DSM 5036 / JCM 8891 / ACAM 34) protein is Small ribosomal subunit protein eS28.